The sequence spans 262 residues: Glutamate racemase (262 aa).

Substrate-binding positions include 10-11 and 42-43; these read DS and FG. The Proton donor/acceptor role is filled by cysteine 74. 75-76 contacts substrate; the sequence is NT. Residue cysteine 189 is the Proton donor/acceptor of the active site. Position 190–191 (190–191) interacts with substrate; the sequence is TH.

Belongs to the aspartate/glutamate racemases family.

It catalyses the reaction L-glutamate = D-glutamate. Its pathway is cell wall biogenesis; peptidoglycan biosynthesis. In terms of biological role, provides the (R)-glutamate required for cell wall biosynthesis. In Mesorhizobium japonicum (strain LMG 29417 / CECT 9101 / MAFF 303099) (Mesorhizobium loti (strain MAFF 303099)), this protein is Glutamate racemase.